The following is a 498-amino-acid chain: ATP synthase subunit beta, chloroplastic (498 aa).

Residue 172-179 coordinates ATP; the sequence is GGAGVGKT.

Belongs to the ATPase alpha/beta chains family. F-type ATPases have 2 components, CF(1) - the catalytic core - and CF(0) - the membrane proton channel. CF(1) has five subunits: alpha(3), beta(3), gamma(1), delta(1), epsilon(1). CF(0) has four main subunits: a(1), b(1), b'(1) and c(9-12).

The protein resides in the plastid. The protein localises to the chloroplast thylakoid membrane. It catalyses the reaction ATP + H2O + 4 H(+)(in) = ADP + phosphate + 5 H(+)(out). In terms of biological role, produces ATP from ADP in the presence of a proton gradient across the membrane. The catalytic sites are hosted primarily by the beta subunits. This Saruma henryi (Upright wild ginger) protein is ATP synthase subunit beta, chloroplastic.